Reading from the N-terminus, the 151-residue chain is Large ribosomal subunit protein uL15 (151 aa).

The disordered stretch occupies residues 1–62; the sequence is MVKLNELFPK…GGQMPLYRRV (62 aa). Residues 11–20 show a composition bias toward basic residues; it reads HGSRKAKRRI.

The protein belongs to the universal ribosomal protein uL15 family. As to quaternary structure, part of the 50S ribosomal subunit.

In terms of biological role, binds to the 23S rRNA. The polypeptide is Large ribosomal subunit protein uL15 (Elusimicrobium minutum (strain Pei191)).